A 355-amino-acid polypeptide reads, in one-letter code: N5-carboxyaminoimidazole ribonucleotide synthase (355 aa).

Residues R80, K120, 125 to 131 (GYDGRGQ), 153 to 156 (EQGI), E161, H184, and 237 to 238 (NE) contribute to the ATP site. The ATP-grasp domain occupies 84 to 267 (KQLFDKLHLP…QFELHLRAIT (184 aa)).

It belongs to the PurK/PurT family. In terms of assembly, homodimer.

It catalyses the reaction 5-amino-1-(5-phospho-beta-D-ribosyl)imidazole + hydrogencarbonate + ATP = 5-carboxyamino-1-(5-phospho-D-ribosyl)imidazole + ADP + phosphate + 2 H(+). The protein operates within purine metabolism; IMP biosynthesis via de novo pathway; 5-amino-1-(5-phospho-D-ribosyl)imidazole-4-carboxylate from 5-amino-1-(5-phospho-D-ribosyl)imidazole (N5-CAIR route): step 1/2. In terms of biological role, catalyzes the ATP-dependent conversion of 5-aminoimidazole ribonucleotide (AIR) and HCO(3)(-) to N5-carboxyaminoimidazole ribonucleotide (N5-CAIR). This is N5-carboxyaminoimidazole ribonucleotide synthase from Escherichia coli (strain K12).